A 267-amino-acid chain; its full sequence is UPF0328 protein ECU06_0070 (267 aa).

This sequence belongs to the UPF0328 family.

This is UPF0328 protein ECU06_0070 from Encephalitozoon cuniculi (strain GB-M1) (Microsporidian parasite).